We begin with the raw amino-acid sequence, 309 residues long: D-galacturonate reductase (309 aa).

The Proton donor role is filled by Y50. H109 is a substrate binding site. 210–264 (SPLGSTGSPLMSADPVVKIAEKKGISPTTVLLSYHVNRGSTVLAKSVTPARIKAN) contacts NADP(+).

Belongs to the aldo/keto reductase family.

It carries out the reaction L-galactonate + NADP(+) = aldehydo-D-galacturonate + NADPH + H(+). Its pathway is carbohydrate acid metabolism. Its function is as follows. Mediates the reduction of D-galacturonate to L-galactonate, the first step in D-galacturonate catabolic process. Also has activity with D-glucuronate and DL-glyceraldehyde. No activity is observed with D-glucose, D-fructose, D-xylose, D-galactose, L-arabinose or D-mannose. Activity is seen only with NADPH and not with NADH. The chain is D-galacturonate reductase (gar1) from Hypocrea jecorina (Trichoderma reesei).